An 829-amino-acid chain; its full sequence is uncharacterized protein (829 aa).

The protein belongs to the IIV-6 050L family.

This is an uncharacterized protein from Invertebrate iridescent virus 3 (IIV-3).